A 316-amino-acid chain; its full sequence is MATFHTVRDAVKLFDAGISGGKHLNKGQEEGVLVEETNLCLWNKEVNKLKEKIKNAVKTKIEALLELEEAKKTVEQLSQELGIKRNMINDEKDLDLSSSVRVVTSELGVAKESIHRVAEEESELCMLMESLKLELQNVEKAHSELKEIEQRERDHQAIEDLKKETKDAKTQLSLLEEELKIAVFEAQEAKDAEEHARERLNVAVLESDFRSLAVVKESAAEELTETEALRACRDETLKTLEMSEREIEDIKAATQDALKKAEMAQEATIVVDVELKRRRKAASRILAESKMCAKSTKEVLKSKPRSSSKEGCLVKC.

Coiled coils occupy residues 42–90 (WNKE…MIND), 119–195 (EEES…AEEH), and 233–266 (RDET…MAQE). A disordered region spans residues 295 to 316 (STKEVLKSKPRSSSKEGCLVKC).

This sequence belongs to the WEB family.

The sequence is that of WEB family protein At3g13190 from Arabidopsis thaliana (Mouse-ear cress).